Reading from the N-terminus, the 150-residue chain is MLKNKTKKTEVYALCRHISLSADKARRVIDQIRGRSYEETLMILELMPYRACYPILKLVYSAASNAAYSMDSAEVNLVISKAEVNEGTITKKFKPRARGRSYVIKRTTCHITIVVKDISLDKYEEIYSFKNPIWKNTIDVYSNGVVWHKK.

This sequence belongs to the universal ribosomal protein uL22 family. As to quaternary structure, part of the 50S ribosomal subunit.

The protein localises to the plastid. In terms of biological role, this protein binds specifically to 23S rRNA. Functionally, the globular domain of the protein is located near the polypeptide exit tunnel on the outside of the subunit, while an extended beta-hairpin is found that lines the wall of the exit tunnel in the center of the 70S ribosome. The chain is Large ribosomal subunit protein uL22c (rpl22) from Orobanche minor (Small broomrape).